Consider the following 750-residue polypeptide: Neprilysin (750 aa).

Positions 1–14 (MGKSESQMDITDIN) are enriched in polar residues. Residues 1–20 (MGKSESQMDITDINTPKPKK) form a disordered region. A lipid anchor (N-myristoyl glycine) is attached at glycine 2. Over 2–28 (GKSESQMDITDINTPKPKKKQRWTPLE) the chain is Cytoplasmic. Serine 4 and serine 6 each carry phosphoserine. The short motif at 16–23 (PKPKKKQR) is the Stop-transfer sequence element. A helical; Signal-anchor for type II membrane protein transmembrane segment spans residues 29–51 (ISLSVLVLLLTIIAVTMIALYAT). Residues 52–750 (YDDGICKSSD…MNPEKKCRVW (699 aa)) lie on the Extracellular side of the membrane. The 695-residue stretch at 56–750 (ICKSSDCIKS…MNPEKKCRVW (695 aa)) folds into the Peptidase M13 domain. 6 disulfide bridges follow: cysteine 57–cysteine 62, cysteine 80–cysteine 735, cysteine 88–cysteine 695, cysteine 143–cysteine 411, cysteine 234–cysteine 242, and cysteine 621–cysteine 747. Arginine 103 lines the a peptide pocket. Asparagine 145 is a glycosylation site (N-linked (GlcNAc...) asparagine). N-linked (GlcNAc...) asparagine glycans are attached at residues asparagine 285, asparagine 311, asparagine 325, and asparagine 335. Residue histidine 584 coordinates Zn(2+). Glutamate 585 is an active-site residue. A Zn(2+)-binding site is contributed by histidine 588. Asparagine 628 is a glycosylation site (N-linked (GlcNAc...) asparagine). Residue glutamate 647 coordinates Zn(2+). The active-site Proton donor is aspartate 651.

This sequence belongs to the peptidase M13 family. Zn(2+) is required as a cofactor. Post-translationally, myristoylation is a determinant of membrane targeting. In terms of processing, glycosylation at Asn-628 is necessary both for surface expression and neutral endopeptidase activity.

The protein resides in the cell membrane. It carries out the reaction Preferential cleavage of polypeptides between hydrophobic residues, particularly with Phe or Tyr at P1'.. It catalyses the reaction substance P + H2O = substance P(1-9) + L-Leu-L-Met-NH2. The enzyme catalyses substance P + H2O = substance P(1-7) + L-Phe-Gly-L-Leu-L-Met-NH2. The catalysed reaction is neurotensin + H2O = neurotensin(1-11) + L-isoleucyl-L-leucine. It carries out the reaction neurotensin + H2O = neurotensin(1-10) + L-tyrosyl-L-isoleucyl-L-leucine. Thermolysin-like specificity, but is almost confined on acting on polypeptides of up to 30 amino acids. Biologically important in the destruction of opioid peptides such as Met- and Leu-enkephalins by cleavage of a Gly-Phe bond. Catalyzes cleavage of bradykinin, substance P and neurotensin peptides. Able to cleave angiotensin-1, angiotensin-2 and angiotensin 1-9. Involved in the degradation of atrial natriuretic factor (ANF) and brain natriuretic factor (BNP(1-32)). Displays UV-inducible elastase activity toward skin preelastic and elastic fibers. This chain is Neprilysin (MME), found in Pongo abelii (Sumatran orangutan).